The following is a 71-amino-acid chain: Natterin-P (71 aa).

Positions 1–18 (MKLLVLLVTLLVLSWTSA) are cleaved as a signal peptide. The propeptide occupies 19 to 45 (EDLGDQEILENNEDNNHESELGEPAAQ). Acidic residues predominate over residues 22-31 (GDQEILENNE). The tract at residues 22 to 54 (GDQEILENNEDNNHESELGEPAAQHTDDETSQL) is disordered. Cysteine 62 and cysteine 71 form a disulfide bridge.

Belongs to the natterin family. In terms of tissue distribution, expressed by the venom gland.

The protein localises to the secreted. With respect to regulation, inhibited by tissue-kallikrein inhibitor TKI and trasylol. Plasma kallikrein inhibitor PKSI527 and classical inhibitors of serine-, metallo-, thiol- or aspartate-peptidases evokes a minor inhibition of the peptide digestion. Shows nociceptive, edema-inducing and kininogenase activity with release of kallidin from low molecular weight kininogen. The cleavage occurs at Met-Lys bonds. The chain is Natterin-P from Thalassophryne nattereri (Copper Joe toadfish).